Reading from the N-terminus, the 306-residue chain is UDP-3-O-acyl-N-acetylglucosamine deacetylase (306 aa).

Zn(2+) is bound by residues H79, H239, and D243. The active-site Proton donor is H266.

The protein belongs to the LpxC family. Requires Zn(2+) as cofactor.

It catalyses the reaction a UDP-3-O-[(3R)-3-hydroxyacyl]-N-acetyl-alpha-D-glucosamine + H2O = a UDP-3-O-[(3R)-3-hydroxyacyl]-alpha-D-glucosamine + acetate. It functions in the pathway glycolipid biosynthesis; lipid IV(A) biosynthesis; lipid IV(A) from (3R)-3-hydroxytetradecanoyl-[acyl-carrier-protein] and UDP-N-acetyl-alpha-D-glucosamine: step 2/6. Catalyzes the hydrolysis of UDP-3-O-myristoyl-N-acetylglucosamine to form UDP-3-O-myristoylglucosamine and acetate, the committed step in lipid A biosynthesis. The chain is UDP-3-O-acyl-N-acetylglucosamine deacetylase from Glaesserella parasuis serovar 5 (strain SH0165) (Haemophilus parasuis).